A 377-amino-acid polypeptide reads, in one-letter code: Succinyl-diaminopimelate desuccinylase (377 aa).

Position 68 (His-68) interacts with Zn(2+). The active site involves Asp-70. Asp-101 provides a ligand contact to Zn(2+). The Proton acceptor role is filled by Glu-135. Residues Glu-136, Glu-164, and His-350 each coordinate Zn(2+).

Belongs to the peptidase M20A family. DapE subfamily. In terms of assembly, homodimer. It depends on Zn(2+) as a cofactor. Co(2+) is required as a cofactor.

It carries out the reaction N-succinyl-(2S,6S)-2,6-diaminopimelate + H2O = (2S,6S)-2,6-diaminopimelate + succinate. The protein operates within amino-acid biosynthesis; L-lysine biosynthesis via DAP pathway; LL-2,6-diaminopimelate from (S)-tetrahydrodipicolinate (succinylase route): step 3/3. In terms of biological role, catalyzes the hydrolysis of N-succinyl-L,L-diaminopimelic acid (SDAP), forming succinate and LL-2,6-diaminopimelate (DAP), an intermediate involved in the bacterial biosynthesis of lysine and meso-diaminopimelic acid, an essential component of bacterial cell walls. This Vibrio cholerae serotype O1 (strain ATCC 39541 / Classical Ogawa 395 / O395) protein is Succinyl-diaminopimelate desuccinylase.